The primary structure comprises 208 residues: Small ribosomal subunit protein uS4 (208 aa).

The S4 RNA-binding domain occupies 98–159; sequence RRLDNVAYRL…KSRKVAAISE (62 aa).

Belongs to the universal ribosomal protein uS4 family. Part of the 30S ribosomal subunit. Contacts protein S5. The interaction surface between S4 and S5 is involved in control of translational fidelity.

One of the primary rRNA binding proteins, it binds directly to 16S rRNA where it nucleates assembly of the body of the 30S subunit. Its function is as follows. With S5 and S12 plays an important role in translational accuracy. This is Small ribosomal subunit protein uS4 from Citrifermentans bemidjiense (strain ATCC BAA-1014 / DSM 16622 / JCM 12645 / Bem) (Geobacter bemidjiensis).